Here is a 508-residue protein sequence, read N- to C-terminus: Maturase K (508 aa).

This sequence belongs to the intron maturase 2 family. MatK subfamily.

It localises to the plastid. Its subcellular location is the chloroplast. Its function is as follows. Usually encoded in the trnK tRNA gene intron. Probably assists in splicing its own and other chloroplast group II introns. The protein is Maturase K of Cunninghamia lanceolata (China fir).